A 238-amino-acid polypeptide reads, in one-letter code: 5'-deoxynucleotidase YBR242W (238 aa).

One can recognise an HD domain in the interval 77-183 (ISDHMYRLSI…VKDIDKYEML (107 aa)). Histidine 80, histidine 108, aspartate 109, glutamate 112, aspartate 117, isoleucine 118, and aspartate 178 together coordinate a divalent metal cation.

Belongs to the HDDC2 family. In terms of assembly, homodimer. Mn(2+) is required as a cofactor. Requires Co(2+) as cofactor. It depends on Mg(2+) as a cofactor.

It carries out the reaction a 2'-deoxyribonucleoside 5'-phosphate + H2O = a 2'-deoxyribonucleoside + phosphate. Functionally, catalyzes the dephosphorylation of the nucleoside 5'-monophosphates deoxyadenosine monophosphate (dAMP), deoxycytidine monophosphate (dCMP), deoxyguanosine monophosphate (dGMP) and deoxythymidine monophosphate (dTMP). The protein is 5'-deoxynucleotidase YBR242W of Saccharomyces cerevisiae (strain ATCC 204508 / S288c) (Baker's yeast).